Reading from the N-terminus, the 267-residue chain is Hydroxyethylthiazole kinase (267 aa).

Met-46 contributes to the substrate binding site. Positions 122 and 168 each coordinate ATP. Position 195 (Gly-195) interacts with substrate.

This sequence belongs to the Thz kinase family. Mg(2+) serves as cofactor.

The catalysed reaction is 5-(2-hydroxyethyl)-4-methylthiazole + ATP = 4-methyl-5-(2-phosphooxyethyl)-thiazole + ADP + H(+). It functions in the pathway cofactor biosynthesis; thiamine diphosphate biosynthesis; 4-methyl-5-(2-phosphoethyl)-thiazole from 5-(2-hydroxyethyl)-4-methylthiazole: step 1/1. Catalyzes the phosphorylation of the hydroxyl group of 4-methyl-5-beta-hydroxyethylthiazole (THZ). The sequence is that of Hydroxyethylthiazole kinase from Moorella thermoacetica (strain ATCC 39073 / JCM 9320).